We begin with the raw amino-acid sequence, 116 residues long: uncharacterized protein (116 aa).

Disordered stretches follow at residues 1-26 and 74-116; these read MLLTPAKTTRTEDSANSTDDSSKSSN and ENDL…KSSI. Over residues 14–26 the composition is skewed to low complexity; the sequence is SANSTDDSSKSSN. The span at 74–86 shows a compositional bias: basic and acidic residues; sequence ENDLKRSKSQGRE. Residues 104–116 show a composition bias toward polar residues; sequence NTASEIQRTKSSI.

This is an uncharacterized protein from Saccharomyces cerevisiae (strain ATCC 204508 / S288c) (Baker's yeast).